The chain runs to 167 residues: MLAIALLVLLCASASANSIQSRSSSYSGEYGGKGGKRFSHSGNQLDGPITAIRIRVNRYYIIGLQVRYGTVWSDYVGGNQGDLEEIFLHPGESVIQVSGKYKSYVKQLIFVTDKGRYLPFGKDSGTSFNAVPLHPNTVLRFISGRSGSAIDAISLHWDTYPSHCNTC.

Residues 1-16 form the signal peptide; that stretch reads MLAIALLVLLCASASA. The 136-residue stretch at 24 to 159 folds into the Jacalin-type lectin domain; it reads SSYSGEYGGK…IDAISLHWDT (136 aa).

It belongs to the jacalin lectin family. As to expression, expressed in pancreas, colon, duodenum, and much less in stomach.

It localises to the secreted. It is found in the extracellular space. The protein localises to the extracellular matrix. The protein resides in the zymogen granule lumen. Its subcellular location is the golgi apparatus lumen. Its function is as follows. May play a role in protein trafficking. May act as a linker molecule between the submembranous matrix on the luminal side of zymogen granule membrane (ZGM) and aggregated secretory proteins during granule formation in the TGN. This is Zymogen granule membrane protein 16 (Zg16) from Rattus norvegicus (Rat).